The following is a 460-amino-acid chain: Cysteine--tRNA ligase (460 aa).

Residue Cys-28 participates in Zn(2+) binding. The 'HIGH' region signature appears at 30 to 40 (MTVYDYCHLGH). Zn(2+) is bound by residues Cys-209, His-234, and Glu-238. The 'KMSKS' region signature appears at 266–270 (KMSKS). Lys-269 serves as a coordination point for ATP.

This sequence belongs to the class-I aminoacyl-tRNA synthetase family. In terms of assembly, monomer. Zn(2+) serves as cofactor.

The protein localises to the cytoplasm. The catalysed reaction is tRNA(Cys) + L-cysteine + ATP = L-cysteinyl-tRNA(Cys) + AMP + diphosphate. In Pseudomonas paraeruginosa (strain DSM 24068 / PA7) (Pseudomonas aeruginosa (strain PA7)), this protein is Cysteine--tRNA ligase.